Reading from the N-terminus, the 509-residue chain is Cytochrome P450 monooxygenase aba1 (509 aa).

Residues 1–31 form the signal peptide; it reads MSNSILNLGSFACLLSLGSIVLWYTISAVLA. A glycan (N-linked (GlcNAc...) asparagine) is linked at Asn402. Position 451 (Cys451) interacts with heme. The N-linked (GlcNAc...) asparagine glycan is linked to Asn462.

This sequence belongs to the cytochrome P450 family. Heme serves as cofactor.

It participates in hormone biosynthesis. In terms of biological role, cytochrome P450 monooxygenase; part of the gene cluster that mediates the biosynthesis of abscisic acid (ABA), a phytohormone that acts antagonistically toward salicylic acid (SA), jasmonic acid (JA) and ethylene (ETH) signaling, to impede plant defense responses. The first step of the pathway catalyzes the reaction from farnesyl diphosphate to alpha-ionylideneethane performed by the alpha-ionylideneethane synthase aba3 via a three-step reaction mechanism involving 2 neutral intermediates, beta-farnesene and allofarnesene. The cytochrome P450 monooxygenase aba1 might then be involved in the conversion of alpha-ionylideneethane to alpha-ionylideneacetic acid. Alpha-ionylideneacetic acid is further converted to abscisic acid in 2 steps involving the cytochrome P450 monooxygenase aba2 and the short-chain dehydrogenase/reductase aba4, via the intermediates 1'-deoxy-ABA or 1',4'-trans-diol-ABA, depending on the order of action of these 2 enzymes. Aba2 is responsible for the hydroxylation of carbon atom C-1' and aba4 might be involved in the oxidation of the C-4' carbon atom. In Botryotinia fuckeliana (strain B05.10) (Noble rot fungus), this protein is Cytochrome P450 monooxygenase aba1 (aba1).